A 2211-amino-acid chain; its full sequence is Nonribosomal peptide synthetase 13 (2211 aa).

The adenylation 1 stretch occupies residues 76-475 (TYAELDSLSD…IEHHLQLTLP (400 aa)). The 78-residue stretch at 594 to 671 (PPSTPKEATI…EQSKRAGLIQ (78 aa)) folds into the Carrier 1 domain. An O-(pantetheine 4'-phosphoryl)serine modification is found at S631. The segment at 710-975 (EDIYPCTALQ…IATVPTRIRV (266 aa)) is condensation 1. An adenylation 2 region spans residues 1169–1563 (TYRELWAHSS…LGAVEASVMR (395 aa)). The Carrier 2 domain maps to 1677–1756 (PMSDDNERRL…RSRHLITEQA (80 aa)). Residue S1714 is modified to O-(pantetheine 4'-phosphoryl)serine. Residues 1814–2069 (HFQFDLSGAV…CTNYIPYRLS (256 aa)) are condensation 2.

Belongs to the NRP synthetase family.

It carries out the reaction L-proline + L-tryptophan + 2 ATP = brevianamide F + 2 AMP + 2 diphosphate + 2 H(+). Its pathway is mycotoxin biosynthesis. Its function is as follows. Nonribosomal peptide synthetase; part of the gene cluster that mediates the biosynthesis of fumitremorgins, indole alkaloids that carry not only intriguing chemical structures, but also interesting biological and pharmacological activities. The biosynthesis of fumitremorgin-type alkaloids begins by condensation of the two amino acids L-tryptophan and L-proline to brevianamide F, catalyzed by the non-ribosomal peptide synthetase ftmA. Brevianamide F is then prenylated by the prenyltransferase ftmPT1/ftmB in the presence of dimethylallyl diphosphate, resulting in the formation of tryprostatin B. The three cytochrome P450 monooxygenases, ftmP450-1/ftmC, ftmP450-2/ftmE and ftmP450-3/FtmG, are responsible for the conversion of tryprostatin B to 6-hydroxytryprostatin B, tryprostatin A to fumitremorgin C and fumitremorgin C to 12,13-dihydroxyfumitremorgin C, respectively. The putative methyltransferase ftmMT/ftmD is expected for the conversion of 6-hydroxytryprostatin B to tryprostatin A. FtmPT2/FtmH catalyzes the prenylation of 12,13-dihydroxyfumitre-morgin C in the presence of dimethylallyl diphosphate, resulting in the formation of fumitremorgin B. Fumitremorgin B is further converted to verruculogen by ftmOx1/ftmF via the insertion of an endoperoxide bond between the two prenyl moieties. In some fungal species, verruculogen is further converted to fumitremorgin A, but the enzymes involved in this step have not been identified yet. This is Nonribosomal peptide synthetase 13 from Aspergillus fumigatus (Neosartorya fumigata).